The sequence spans 170 residues: RxLR effector protein PITG_07555 (170 aa).

The N-terminal stretch at 1-17 is a signal peptide; it reads MQAYHLLLVCMYISCSA. Positions 50–62 match the RxLR-dEER motif; the sequence is RALRTHNPDREER.

This sequence belongs to the RxLR effector family.

The protein resides in the secreted. The protein localises to the host cytoplasm. It localises to the host nucleus. Functionally, effector that enhances P.infestans colonization of Nicotiana benthamiana leaves. This Phytophthora infestans (strain T30-4) (Potato late blight agent) protein is RxLR effector protein PITG_07555.